A 457-amino-acid polypeptide reads, in one-letter code: Putative purine-cytosine permease YxlA (457 aa).

12 consecutive transmembrane segments (helical) span residues 24–44, 50–70, 90–110, 127–147, 164–184, 192–212, 228–248, 264–284, 316–336, 341–361, 392–412, and 420–440; these read FPVW…TIPV, LFWS…FMAS, FGVI…LGFF, IPGS…TIFG, AVFF…GSWI, IFLV…PYVA, FWYS…LGAL, IVQL…FGQM, IIMI…GQSN, FLNF…INLV, IAFV…FYIG, and GGDI…YVLM.

This sequence belongs to the purine-cytosine permease (2.A.39) family.

The protein localises to the cell membrane. The polypeptide is Putative purine-cytosine permease YxlA (yxlA) (Bacillus subtilis (strain 168)).